We begin with the raw amino-acid sequence, 65 residues long: 7 kDa A-type inclusion protein (65 aa).

Positions 1 to 20 are enriched in polar residues; sequence MSNQNIPQLSEYQTSVSQVA. Residues 1–32 form a disordered region; the sequence is MSNQNIPQLSEYQTSVSQVAVTPPPKPKTPQI.

The polypeptide is 7 kDa A-type inclusion protein (Bos taurus (Bovine)).